We begin with the raw amino-acid sequence, 778 residues long: Probable dipeptidyl peptidase 4 (778 aa).

A signal peptide spans 1–18 (MKTSQFLSLLLLAGIAQA). 3 N-linked (GlcNAc...) asparagine glycosylation sites follow: asparagine 84, asparagine 114, and asparagine 222. Active-site charge relay system residues include serine 616, aspartate 693, and histidine 728.

It belongs to the peptidase S9B family.

The protein localises to the secreted. The catalysed reaction is Release of an N-terminal dipeptide, Xaa-Yaa-|-Zaa-, from a polypeptide, preferentially when Yaa is Pro, provided Zaa is neither Pro nor hydroxyproline.. In terms of biological role, extracellular dipeptidyl-peptidase which removes N-terminal dipeptides sequentially from polypeptides having unsubstituted N-termini provided that the penultimate residue is proline. Contributes to pathogenicity. This Arthroderma benhamiae (strain ATCC MYA-4681 / CBS 112371) (Trichophyton mentagrophytes) protein is Probable dipeptidyl peptidase 4 (DPP4).